The sequence spans 56 residues: Large ribosomal subunit protein bL33 (56 aa).

Belongs to the bacterial ribosomal protein bL33 family.

In Aliarcobacter butzleri (strain RM4018) (Arcobacter butzleri), this protein is Large ribosomal subunit protein bL33.